A 332-amino-acid polypeptide reads, in one-letter code: Ketol-acid reductoisomerase (NADP(+)) (332 aa).

The KARI N-terminal Rossmann domain occupies M1–T182. NADP(+) contacts are provided by residues Y25–Q28, K48, S53, and D83–Q86. H108 is a catalytic residue. G134 contributes to the NADP(+) binding site. In terms of domain architecture, KARI C-terminal knotted spans A183–D329. Mg(2+) is bound by residues D191, E195, E227, and E231. S252 lines the substrate pocket.

The protein belongs to the ketol-acid reductoisomerase family. The cofactor is Mg(2+).

The catalysed reaction is (2R)-2,3-dihydroxy-3-methylbutanoate + NADP(+) = (2S)-2-acetolactate + NADPH + H(+). It carries out the reaction (2R,3R)-2,3-dihydroxy-3-methylpentanoate + NADP(+) = (S)-2-ethyl-2-hydroxy-3-oxobutanoate + NADPH + H(+). The protein operates within amino-acid biosynthesis; L-isoleucine biosynthesis; L-isoleucine from 2-oxobutanoate: step 2/4. Its pathway is amino-acid biosynthesis; L-valine biosynthesis; L-valine from pyruvate: step 2/4. Functionally, involved in the biosynthesis of branched-chain amino acids (BCAA). Catalyzes an alkyl-migration followed by a ketol-acid reduction of (S)-2-acetolactate (S2AL) to yield (R)-2,3-dihydroxy-isovalerate. In the isomerase reaction, S2AL is rearranged via a Mg-dependent methyl migration to produce 3-hydroxy-3-methyl-2-ketobutyrate (HMKB). In the reductase reaction, this 2-ketoacid undergoes a metal-dependent reduction by NADPH to yield (R)-2,3-dihydroxy-isovalerate. This is Ketol-acid reductoisomerase (NADP(+)) from Nitrosopumilus maritimus (strain SCM1).